Consider the following 232-residue polypeptide: Ubiquinone biosynthesis O-methyltransferase (232 aa).

4 residues coordinate S-adenosyl-L-methionine: Arg-36, Gly-55, Asp-76, and Met-120.

It belongs to the methyltransferase superfamily. UbiG/COQ3 family.

It catalyses the reaction a 3-demethylubiquinol + S-adenosyl-L-methionine = a ubiquinol + S-adenosyl-L-homocysteine + H(+). The catalysed reaction is a 3-(all-trans-polyprenyl)benzene-1,2-diol + S-adenosyl-L-methionine = a 2-methoxy-6-(all-trans-polyprenyl)phenol + S-adenosyl-L-homocysteine + H(+). It participates in cofactor biosynthesis; ubiquinone biosynthesis. In terms of biological role, O-methyltransferase that catalyzes the 2 O-methylation steps in the ubiquinone biosynthetic pathway. In Chromobacterium violaceum (strain ATCC 12472 / DSM 30191 / JCM 1249 / CCUG 213 / NBRC 12614 / NCIMB 9131 / NCTC 9757 / MK), this protein is Ubiquinone biosynthesis O-methyltransferase.